The primary structure comprises 156 residues: Protein-export protein SecB (156 aa).

This sequence belongs to the SecB family. Homotetramer, a dimer of dimers. One homotetramer interacts with 1 SecA dimer.

Its subcellular location is the cytoplasm. In terms of biological role, one of the proteins required for the normal export of preproteins out of the cell cytoplasm. It is a molecular chaperone that binds to a subset of precursor proteins, maintaining them in a translocation-competent state. It also specifically binds to its receptor SecA. The polypeptide is Protein-export protein SecB (Xanthobacter autotrophicus (strain ATCC BAA-1158 / Py2)).